Reading from the N-terminus, the 360-residue chain is UPF0496 protein At3g19250 (360 aa).

The disordered stretch occupies residues 1–29 (MPHCFTFKPASPEGSLGDDHLPHPSPEGS). A run of 2 helical transmembrane segments spans residues 205–225 (HHAT…VAAS) and 229–249 (IAYH…TPYL).

The protein belongs to the UPF0496 family.

It localises to the membrane. The sequence is that of UPF0496 protein At3g19250 from Arabidopsis thaliana (Mouse-ear cress).